We begin with the raw amino-acid sequence, 417 residues long: Phosphoglycerate kinase 1 (417 aa).

Ser2 is modified (N-acetylserine). 2 positions are modified to phosphoserine: Ser2 and Ser4. Lys6 bears the N6-succinyllysine mark. An N6-acetyllysine modification is found at Lys11. (2R)-3-phosphoglycerate-binding residues include Val23, Asp24, Phe25, Asn26, Gln38, Arg39, Ser62, His63, Gly65, and Arg66. Residues 38–43 (QRIKAA) are mitochondrial targeting region exposed following cis-trans isomerization by PIN1 and recognized by the TOM complex for mitochondrial translocation of the protein. Lys75 carries the post-translational modification N6-acetyllysine. Tyr76 carries the phosphotyrosine modification. 2 positions are modified to N6-acetyllysine: Lys86 and Lys91. N6-(2-hydroxyisobutyryl)lysine; alternate is present on Lys97. An N6-acetyllysine; alternate modification is found at Lys97. Positions 122 and 123 each coordinate (2R)-3-phosphoglycerate. Lys131 bears the N6-acetyllysine; alternate mark. Lys131 is subject to N6-malonyllysine; alternate. Position 146 is an N6-acetyllysine (Lys146). Residues His170 and Arg171 each contribute to the (2R)-3-phosphoglycerate site. N6-succinyllysine is present on Lys191. Tyr196 is subject to Phosphotyrosine. An N6-acetyllysine modification is found at Lys199. Position 203 is a phosphoserine (Ser203). Gly214 contributes to the ADP binding site. Position 214 (Gly214) interacts with CDP. Residues Ala215 and Lys216 each coordinate AMP. ATP is bound at residue Ala215. Ala215 is a Mg(2+) binding site. Position 216 is an N6-(2-hydroxyisobutyryl)lysine (Lys216). Mg(2+) contacts are provided by Ala218 and Asp219. Asp219 is a binding site for CDP. Lys220 lines the AMP pocket. An ATP-binding site is contributed by Lys220. Position 220 is an N6-(2-hydroxyisobutyryl)lysine (Lys220). Gly238 contacts ADP. Gly238 contributes to the CDP binding site. Gly239 serves as a coordination point for AMP. Gly239 is a binding site for ATP. Residues Lys267 and Lys291 each carry the N6-acetyllysine modification. Gly313 serves as a coordination point for AMP. Gly313 provides a ligand contact to ATP. An N6-(2-hydroxyisobutyryl)lysine modification is found at Lys323. CDP is bound by residues Gly338, Val340, and Phe343. Residue Phe343 coordinates ADP. Glu344 provides a ligand contact to AMP. Residues Glu344, Asp375, and Thr376 each contribute to the ATP site. Residue Asp375 coordinates Mg(2+).

Belongs to the phosphoglycerate kinase family. In terms of assembly, monomer. Interacts with kinase MAPK1/ERK2; the interaction is direct, occurs under hypoxic conditions, and promotes its interaction with PIN1. Interacts with peptidyl-prolyl cis-trans isomerase PIN1; the interaction is direct, occurs under hypoxic conditions, and targets the protein to the mitochondrion by promoting interactions with the TOM complex. Interacts with mitochondrial circRNA mcPGK1 (via its 2nd stem-loop); the interaction is direct and targets the protein to the mitochondrion by promoting interactions with the TOM complex. Interacts with pyruvate dehydrogenase kinase PDK1; the interaction is direct, occurs under hypoxic conditions and leads to PDK1-mediated inhibition of pyruvate dehydrogenase complex activity. Mg(2+) is required as a cofactor. Post-translationally, phosphorylated at Ser-203 by MAPK1/ERK2 under hypoxic conditions, which promotes its mitochondrial targeting.

The protein localises to the cytoplasm. It localises to the cytosol. It is found in the mitochondrion matrix. It carries out the reaction (2R)-3-phosphoglycerate + ATP = (2R)-3-phospho-glyceroyl phosphate + ADP. It catalyses the reaction L-seryl-[protein] + ATP = O-phospho-L-seryl-[protein] + ADP + H(+). It participates in carbohydrate degradation; glycolysis; pyruvate from D-glyceraldehyde 3-phosphate: step 2/5. Catalyzes one of the two ATP producing reactions in the glycolytic pathway via the reversible conversion of 1,3-diphosphoglycerate to 3-phosphoglycerate. Both L- and D- forms of purine and pyrimidine nucleotides can be used as substrates, but the activity is much lower on pyrimidines. In addition to its role as a glycolytic enzyme, it seems that PGK-1 acts as a polymerase alpha cofactor protein (primer recognition protein). Acts as a protein kinase when localized to the mitochondrion where it phosphorylates pyruvate dehydrogenase kinase PDK1 to inhibit pyruvate dehydrogenase complex activity and suppress the formation of acetyl-coenzyme A from pyruvate, and consequently inhibit oxidative phosphorylation and promote glycolysis. May play a role in sperm motility. The protein is Phosphoglycerate kinase 1 (PGK1) of Notamacropus eugenii (Tammar wallaby).